The primary structure comprises 675 residues: tRNA 5-methylaminomethyl-2-thiouridine biosynthesis bifunctional protein MnmC (675 aa).

Residues 1–245 (MANLPIQHAS…KREMLSGLLP (245 aa)) are tRNA (mnm(5)s(2)U34)-methyltransferase. Residues 271-675 (IGGGIASVLT…LLKGKPVTHD (405 aa)) form an FAD-dependent cmnm(5)s(2)U34 oxidoreductase region.

In the N-terminal section; belongs to the methyltransferase superfamily. tRNA (mnm(5)s(2)U34)-methyltransferase family. This sequence in the C-terminal section; belongs to the DAO family. It depends on FAD as a cofactor.

It is found in the cytoplasm. The enzyme catalyses 5-aminomethyl-2-thiouridine(34) in tRNA + S-adenosyl-L-methionine = 5-methylaminomethyl-2-thiouridine(34) in tRNA + S-adenosyl-L-homocysteine + H(+). Its function is as follows. Catalyzes the last two steps in the biosynthesis of 5-methylaminomethyl-2-thiouridine (mnm(5)s(2)U) at the wobble position (U34) in tRNA. Catalyzes the FAD-dependent demodification of cmnm(5)s(2)U34 to nm(5)s(2)U34, followed by the transfer of a methyl group from S-adenosyl-L-methionine to nm(5)s(2)U34, to form mnm(5)s(2)U34. In Pectobacterium atrosepticum (strain SCRI 1043 / ATCC BAA-672) (Erwinia carotovora subsp. atroseptica), this protein is tRNA 5-methylaminomethyl-2-thiouridine biosynthesis bifunctional protein MnmC.